A 475-amino-acid polypeptide reads, in one-letter code: 3-isopropylmalate dehydratase large subunit (475 aa).

Residues Cys347, Cys407, and Cys410 each contribute to the [4Fe-4S] cluster site. Residues 418–442 (LAPGERSASTSNRNFEGRQGKGGRT) form a disordered region.

The protein belongs to the aconitase/IPM isomerase family. LeuC type 1 subfamily. Heterodimer of LeuC and LeuD. The cofactor is [4Fe-4S] cluster.

It carries out the reaction (2R,3S)-3-isopropylmalate = (2S)-2-isopropylmalate. The protein operates within amino-acid biosynthesis; L-leucine biosynthesis; L-leucine from 3-methyl-2-oxobutanoate: step 2/4. Functionally, catalyzes the isomerization between 2-isopropylmalate and 3-isopropylmalate, via the formation of 2-isopropylmaleate. The sequence is that of 3-isopropylmalate dehydratase large subunit from Streptomyces griseus subsp. griseus (strain JCM 4626 / CBS 651.72 / NBRC 13350 / KCC S-0626 / ISP 5235).